The following is a 266-amino-acid chain: Small ribosomal subunit protein uS3 (266 aa).

Residues Val-39 to Arg-107 enclose the KH type-2 domain. Residues Pro-214 to Glu-266 form a disordered region. 2 stretches are compositionally biased toward basic and acidic residues: residues Arg-230–Glu-241 and Gly-257–Glu-266.

It belongs to the universal ribosomal protein uS3 family. Part of the 30S ribosomal subunit. Forms a tight complex with proteins S10 and S14.

Binds the lower part of the 30S subunit head. Binds mRNA in the 70S ribosome, positioning it for translation. The sequence is that of Small ribosomal subunit protein uS3 from Burkholderia mallei (strain NCTC 10247).